Reading from the N-terminus, the 250-residue chain is Ribonuclease PH (250 aa).

Residues arginine 86 and glycine 124–arginine 126 each bind phosphate.

It belongs to the RNase PH family. In terms of assembly, homohexameric ring arranged as a trimer of dimers.

It carries out the reaction tRNA(n+1) + phosphate = tRNA(n) + a ribonucleoside 5'-diphosphate. Phosphorolytic 3'-5' exoribonuclease that plays an important role in tRNA 3'-end maturation. Removes nucleotide residues following the 3'-CCA terminus of tRNAs; can also add nucleotides to the ends of RNA molecules by using nucleoside diphosphates as substrates, but this may not be physiologically important. Probably plays a role in initiation of 16S rRNA degradation (leading to ribosome degradation) during starvation. This chain is Ribonuclease PH, found in Shouchella clausii (strain KSM-K16) (Alkalihalobacillus clausii).